The sequence spans 176 residues: Crossover junction endodeoxyribonuclease RuvC (176 aa).

Residues D9, E69, and D141 contribute to the active site. Mg(2+) contacts are provided by D9, E69, and D141.

Belongs to the RuvC family. Homodimer which binds Holliday junction (HJ) DNA. The HJ becomes 2-fold symmetrical on binding to RuvC with unstacked arms; it has a different conformation from HJ DNA in complex with RuvA. In the full resolvosome a probable DNA-RuvA(4)-RuvB(12)-RuvC(2) complex forms which resolves the HJ. Mg(2+) serves as cofactor.

It is found in the cytoplasm. The enzyme catalyses Endonucleolytic cleavage at a junction such as a reciprocal single-stranded crossover between two homologous DNA duplexes (Holliday junction).. The RuvA-RuvB-RuvC complex processes Holliday junction (HJ) DNA during genetic recombination and DNA repair. Endonuclease that resolves HJ intermediates. Cleaves cruciform DNA by making single-stranded nicks across the HJ at symmetrical positions within the homologous arms, yielding a 5'-phosphate and a 3'-hydroxyl group; requires a central core of homology in the junction. The consensus cleavage sequence is 5'-(A/T)TT(C/G)-3'. Cleavage occurs on the 3'-side of the TT dinucleotide at the point of strand exchange. HJ branch migration catalyzed by RuvA-RuvB allows RuvC to scan DNA until it finds its consensus sequence, where it cleaves and resolves the cruciform DNA. The chain is Crossover junction endodeoxyribonuclease RuvC from Chromobacterium violaceum (strain ATCC 12472 / DSM 30191 / JCM 1249 / CCUG 213 / NBRC 12614 / NCIMB 9131 / NCTC 9757 / MK).